The chain runs to 207 residues: Urease accessory protein UreG (207 aa).

16-23 (GPVGSGKT) is a binding site for GTP.

The protein belongs to the SIMIBI class G3E GTPase family. UreG subfamily. In terms of assembly, homodimer. UreD, UreF and UreG form a complex that acts as a GTP-hydrolysis-dependent molecular chaperone, activating the urease apoprotein by helping to assemble the nickel containing metallocenter of UreC. The UreE protein probably delivers the nickel.

The protein localises to the cytoplasm. Functionally, facilitates the functional incorporation of the urease nickel metallocenter. This process requires GTP hydrolysis, probably effectuated by UreG. In Cupriavidus metallidurans (strain ATCC 43123 / DSM 2839 / NBRC 102507 / CH34) (Ralstonia metallidurans), this protein is Urease accessory protein UreG.